The primary structure comprises 321 residues: Phosphatidylglycerol phospholipase C (321 aa).

The GP-PDE domain occupies Val2–Cys251. The helical; Anchor for type IV membrane protein transmembrane segment at Trp297–Leu315 threads the bilayer.

Belongs to the glycerophosphoryl diester phosphodiesterase family.

Its subcellular location is the mitochondrion membrane. It is found in the lipid droplet. The catalysed reaction is a 1,2-diacyl-sn-glycero-3-phospho-(1'-sn-glycerol) + H2O = sn-glycerol 3-phosphate + a 1,2-diacyl-sn-glycerol + H(+). Phosphatidylglycerol phospholipase required for the removal of excess phosphatidylglycerol (PG) via a phospholipase C-type degradation mechanism. The sequence is that of Phosphatidylglycerol phospholipase C (PGC1) from Saccharomyces cerevisiae (strain ATCC 204508 / S288c) (Baker's yeast).